The chain runs to 343 residues: Transmembrane protein 120A (343 aa).

Residues 1-132 lie on the Cytoplasmic side of the membrane; it reads MHPPPPGPLG…KQAKFAYKDE (132 aa). Position 130 (K130) interacts with CoA. Residues 133-152 traverse the membrane as a helical segment; the sequence is YEKFKLYLTIILILISFTCR. The Extracellular portion of the chain corresponds to 153 to 158; sequence FLLNSR. Residues 159–177 form a helical membrane-spanning segment; that stretch reads VTDAAFNFLLVWYYCTLTI. The Cytoplasmic segment spans residues 178 to 190; the sequence is RESILINNGSRIK. Residues S187 and R188 each contribute to the CoA site. A helical transmembrane segment spans residues 191–209; that stretch reads GWWVFHHYVSTFLSGVMLT. Residues 210–218 are Extracellular-facing; sequence WPDGLMYQK. Residues 219-240 form a helical membrane-spanning segment; sequence FRNQFLSFSMYQSFVQFLQYYY. CoA contacts are provided by Q237, Y240, Q241, and H283. Topologically, residues 241–270 are cytoplasmic; sequence QSGCLYRLRALGERHTMDLTVEGFQSWMWR. A helical membrane pass occupies residues 271–294; that stretch reads GLTFLLPFLFFGHFWQLFNALTLF. Topologically, residues 295–304 are extracellular; it reads NLARDPECKE. A helical membrane pass occupies residues 305-330; that stretch reads WQVLMCGFPFLLLFLGNFFTTLRVVH. Topologically, residues 331–343 are cytoplasmic; sequence QKFHNQLHGSKKE. Residue K332 participates in CoA binding.

This sequence belongs to the TMEM120 family. Homodimer. Forms heterooligomer with TMEM120B. Interacts with PKD2; TMEM120A inhibits PKD2 channel activity through the physical association of PKD2 with TMEM120A.

It is found in the cell membrane. The protein localises to the nucleus inner membrane. The protein resides in the endoplasmic reticulum. Its function is as follows. Multifunctional protein involved in mechanosensation, and plays an essential role in lipid metabolism and adipocyte differentiation. May function as an ion channel involved in sensing mechanical stimuli. Mediates the mechanosensitivity of the PKD2-TMEM120A channel complex through direct physical interaction. TMEM120A seems to affect mechanosensation by inhibiting PIEZO2 channels, possibly by altering cellular lipid content. TMEM120A is structurally similar to a lipid-modifying enzyme, ELOVL7, and contains a bound coenzyme A molecule, which suggests it might function as an enzyme in lipid metabolism. Additionnaly, implicated in innate immune response against Zika virus. Acts as a key activator of the antiviral signaling involving STING1. This Bos taurus (Bovine) protein is Transmembrane protein 120A.